The sequence spans 195 residues: TM2 domain-containing protein C41D11.9 (195 aa).

A signal peptide spans 1–20 (MLHKILFLICLASFIPTIGS). Over 21 to 136 (ISGTKDVKSK…NWSSGYSWTK (116 aa)) the chain is Extracellular. Residues Asn55, Asn93, and Asn127 are each glycosylated (N-linked (GlcNAc...) asparagine). In terms of domain architecture, TM2 spans 131–179 (GYSWTKTMILSVVLGGFGADRFYLGLWKSAIGKLFSFGGLGVWTLVDVV). A helical membrane pass occupies residues 137–157 (TMILSVVLGGFGADRFYLGLW). The Cytoplasmic portion of the chain corresponds to 158-163 (KSAIGK). A helical transmembrane segment spans residues 164 to 184 (LFSFGGLGVWTLVDVVLIAVG). The Extracellular segment spans residues 185 to 195 (YIKPYDGSMYI).

Belongs to the TM2 family.

The protein localises to the membrane. The protein is TM2 domain-containing protein C41D11.9 of Caenorhabditis elegans.